We begin with the raw amino-acid sequence, 256 residues long: Thiazole synthase (256 aa).

K95 acts as the Schiff-base intermediate with DXP in catalysis. 1-deoxy-D-xylulose 5-phosphate-binding positions include G156, 183–184 (AG), and 205–206 (NT).

Belongs to the ThiG family. Homotetramer. Forms heterodimers with either ThiH or ThiS.

The protein localises to the cytoplasm. The enzyme catalyses [ThiS sulfur-carrier protein]-C-terminal-Gly-aminoethanethioate + 2-iminoacetate + 1-deoxy-D-xylulose 5-phosphate = [ThiS sulfur-carrier protein]-C-terminal Gly-Gly + 2-[(2R,5Z)-2-carboxy-4-methylthiazol-5(2H)-ylidene]ethyl phosphate + 2 H2O + H(+). Its pathway is cofactor biosynthesis; thiamine diphosphate biosynthesis. Its function is as follows. Catalyzes the rearrangement of 1-deoxy-D-xylulose 5-phosphate (DXP) to produce the thiazole phosphate moiety of thiamine. Sulfur is provided by the thiocarboxylate moiety of the carrier protein ThiS. In vitro, sulfur can be provided by H(2)S. In Gluconacetobacter diazotrophicus (strain ATCC 49037 / DSM 5601 / CCUG 37298 / CIP 103539 / LMG 7603 / PAl5), this protein is Thiazole synthase.